The following is a 91-amino-acid chain: Cell division protein FtsB (91 aa).

Residues Met-1–Trp-3 are Cytoplasmic-facing. Residues Pro-4–Leu-21 traverse the membrane as a helical segment. The Periplasmic segment spans residues Gly-22 to Pro-91. A coiled-coil region spans residues Arg-28–Glu-74.

Belongs to the FtsB family. As to quaternary structure, part of a complex composed of FtsB, FtsL and FtsQ.

It is found in the cell inner membrane. In terms of biological role, essential cell division protein. May link together the upstream cell division proteins, which are predominantly cytoplasmic, with the downstream cell division proteins, which are predominantly periplasmic. The polypeptide is Cell division protein FtsB (Aromatoleum aromaticum (strain DSM 19018 / LMG 30748 / EbN1) (Azoarcus sp. (strain EbN1))).